The chain runs to 629 residues: tRNA uridine 5-carboxymethylaminomethyl modification enzyme MnmG (629 aa).

Residues 13–18 (GGGHAG), Val-125, and Ser-180 contribute to the FAD site. 273–287 (GPRYCPSIEDKVMRF) is an NAD(+) binding site. Residue Gln-370 coordinates FAD.

The protein belongs to the MnmG family. As to quaternary structure, homodimer. Heterotetramer of two MnmE and two MnmG subunits. FAD is required as a cofactor.

Its subcellular location is the cytoplasm. Its function is as follows. NAD-binding protein involved in the addition of a carboxymethylaminomethyl (cmnm) group at the wobble position (U34) of certain tRNAs, forming tRNA-cmnm(5)s(2)U34. This Shigella flexneri serotype 5b (strain 8401) protein is tRNA uridine 5-carboxymethylaminomethyl modification enzyme MnmG.